The sequence spans 85 residues: Small ribosomal subunit protein uS17 (85 aa).

It belongs to the universal ribosomal protein uS17 family. In terms of assembly, part of the 30S ribosomal subunit.

One of the primary rRNA binding proteins, it binds specifically to the 5'-end of 16S ribosomal RNA. In Aggregatibacter actinomycetemcomitans (Actinobacillus actinomycetemcomitans), this protein is Small ribosomal subunit protein uS17.